A 93-amino-acid polypeptide reads, in one-letter code: Large ribosomal subunit protein uL23cz/uL23cy (93 aa).

Belongs to the universal ribosomal protein uL23 family. As to quaternary structure, part of the 50S ribosomal subunit.

Its subcellular location is the plastid. The protein resides in the chloroplast. Binds to 23S rRNA. In Cucumis sativus (Cucumber), this protein is Large ribosomal subunit protein uL23cz/uL23cy (rpl23-A).